A 72-amino-acid chain; its full sequence is Translation initiation factor IF-1 (72 aa).

An S1-like domain is found at 1 to 72; the sequence is MAKEDSIRMQ…NKGRIVYRER (72 aa).

The protein belongs to the IF-1 family. As to quaternary structure, component of the 30S ribosomal translation pre-initiation complex which assembles on the 30S ribosome in the order IF-2 and IF-3, IF-1 and N-formylmethionyl-tRNA(fMet); mRNA recruitment can occur at any time during PIC assembly.

The protein resides in the cytoplasm. One of the essential components for the initiation of protein synthesis. Stabilizes the binding of IF-2 and IF-3 on the 30S subunit to which N-formylmethionyl-tRNA(fMet) subsequently binds. Helps modulate mRNA selection, yielding the 30S pre-initiation complex (PIC). Upon addition of the 50S ribosomal subunit IF-1, IF-2 and IF-3 are released leaving the mature 70S translation initiation complex. In Halorhodospira halophila (strain DSM 244 / SL1) (Ectothiorhodospira halophila (strain DSM 244 / SL1)), this protein is Translation initiation factor IF-1.